Consider the following 961-residue polypeptide: Translation initiation factor IF-2 (961 aa).

Over residues 146–158 (PSVPNKTLTTTPH) the composition is skewed to polar residues. The tract at residues 146-373 (PSVPNKTLTT…KTTSQVTTQP (228 aa)) is disordered. Residues 163–176 (NHSEKDVLESHDSS) are compositionally biased toward basic and acidic residues. Low complexity predominate over residues 177 to 187 (NKNIKQSSSQN). Basic and acidic residues predominate over residues 230-239 (SEEKNVDIQQ). Composition is skewed to polar residues over residues 241–285 (EIPS…TAPH) and 301–310 (YQGQNRNNFI). Residues 355–364 (NRGRKRHKQK) show a composition bias toward basic residues. Residues 460–627 (RRPPVVTIMG…LLALQTDILE (168 aa)) enclose the tr-type G domain. The tract at residues 469–476 (GHVDHGKT) is G1. Residue 469-476 (GHVDHGKT) coordinates GTP. The G2 stretch occupies residues 494–498 (GITQH). The segment at 515-518 (DTPG) is G3. GTP-binding positions include 515–519 (DTPGH) and 569–572 (NKMD). The G4 stretch occupies residues 569–572 (NKMD). Residues 605 to 607 (SAK) are G5.

It belongs to the TRAFAC class translation factor GTPase superfamily. Classic translation factor GTPase family. IF-2 subfamily.

The protein resides in the cytoplasm. Functionally, one of the essential components for the initiation of protein synthesis. Protects formylmethionyl-tRNA from spontaneous hydrolysis and promotes its binding to the 30S ribosomal subunits. Also involved in the hydrolysis of GTP during the formation of the 70S ribosomal complex. The chain is Translation initiation factor IF-2 from Lawsonia intracellularis (strain PHE/MN1-00).